The sequence spans 105 residues: Flagellar transcriptional regulator FlhD (105 aa).

Belongs to the FlhD family. Homodimer; disulfide-linked. Forms a heterohexamer composed of two FlhC and four FlhD subunits. Each FlhC binds a FlhD dimer, forming a heterotrimer, and a hexamer assembles by dimerization of two heterotrimers.

It localises to the cytoplasm. In terms of biological role, functions in complex with FlhC as a master transcriptional regulator that regulates transcription of several flagellar and non-flagellar operons by binding to their promoter region. Activates expression of class 2 flagellar genes, including fliA, which is a flagellum-specific sigma factor that turns on the class 3 genes. Also regulates genes whose products function in a variety of physiological pathways. This chain is Flagellar transcriptional regulator FlhD, found in Ralstonia pickettii (strain 12J).